A 643-amino-acid polypeptide reads, in one-letter code: DNA-directed RNA polymerase subunit beta' (643 aa).

Residues cysteine 83, cysteine 85, cysteine 98, and cysteine 101 each contribute to the Zn(2+) site. Mg(2+) is bound by residues aspartate 480, aspartate 482, and aspartate 484.

Belongs to the RNA polymerase beta' chain family. RpoC1 subfamily. In terms of assembly, in plastids the minimal PEP RNA polymerase catalytic core is composed of four subunits: alpha, beta, beta', and beta''. When a (nuclear-encoded) sigma factor is associated with the core the holoenzyme is formed, which can initiate transcription. Mg(2+) serves as cofactor. Zn(2+) is required as a cofactor.

The protein resides in the plastid. It localises to the organellar chromatophore. The enzyme catalyses RNA(n) + a ribonucleoside 5'-triphosphate = RNA(n+1) + diphosphate. In terms of biological role, DNA-dependent RNA polymerase catalyzes the transcription of DNA into RNA using the four ribonucleoside triphosphates as substrates. In Paulinella chromatophora, this protein is DNA-directed RNA polymerase subunit beta'.